The primary structure comprises 394 residues: Formate-dependent phosphoribosylglycinamide formyltransferase (394 aa).

N(1)-(5-phospho-beta-D-ribosyl)glycinamide is bound by residues 21-22 (EL) and Glu81. Residues Arg113, Lys154, 159 to 164 (SSGKGQ), 194 to 197 (EEFI), and Glu202 contribute to the ATP site. Residues 118–307 (RLAAEELGLP…QFELHVRAIL (190 aa)) enclose the ATP-grasp domain. Positions 266 and 278 each coordinate Mg(2+). Residues Asp285, Lys355, and 362 to 363 (RR) each bind N(1)-(5-phospho-beta-D-ribosyl)glycinamide.

It belongs to the PurK/PurT family. In terms of assembly, homodimer.

It carries out the reaction N(1)-(5-phospho-beta-D-ribosyl)glycinamide + formate + ATP = N(2)-formyl-N(1)-(5-phospho-beta-D-ribosyl)glycinamide + ADP + phosphate + H(+). It functions in the pathway purine metabolism; IMP biosynthesis via de novo pathway; N(2)-formyl-N(1)-(5-phospho-D-ribosyl)glycinamide from N(1)-(5-phospho-D-ribosyl)glycinamide (formate route): step 1/1. Involved in the de novo purine biosynthesis. Catalyzes the transfer of formate to 5-phospho-ribosyl-glycinamide (GAR), producing 5-phospho-ribosyl-N-formylglycinamide (FGAR). Formate is provided by PurU via hydrolysis of 10-formyl-tetrahydrofolate. In Pelobacter propionicus (strain DSM 2379 / NBRC 103807 / OttBd1), this protein is Formate-dependent phosphoribosylglycinamide formyltransferase.